Here is a 252-residue protein sequence, read N- to C-terminus: Imidazole glycerol phosphate synthase subunit HisF (252 aa).

Catalysis depends on residues D11 and D130.

Belongs to the HisA/HisF family. As to quaternary structure, heterodimer of HisH and HisF.

The protein localises to the cytoplasm. The enzyme catalyses 5-[(5-phospho-1-deoxy-D-ribulos-1-ylimino)methylamino]-1-(5-phospho-beta-D-ribosyl)imidazole-4-carboxamide + L-glutamine = D-erythro-1-(imidazol-4-yl)glycerol 3-phosphate + 5-amino-1-(5-phospho-beta-D-ribosyl)imidazole-4-carboxamide + L-glutamate + H(+). It functions in the pathway amino-acid biosynthesis; L-histidine biosynthesis; L-histidine from 5-phospho-alpha-D-ribose 1-diphosphate: step 5/9. Its function is as follows. IGPS catalyzes the conversion of PRFAR and glutamine to IGP, AICAR and glutamate. The HisF subunit catalyzes the cyclization activity that produces IGP and AICAR from PRFAR using the ammonia provided by the HisH subunit. The sequence is that of Imidazole glycerol phosphate synthase subunit HisF from Dictyoglomus thermophilum (strain ATCC 35947 / DSM 3960 / H-6-12).